We begin with the raw amino-acid sequence, 143 residues long: Nucleoside diphosphate kinase (143 aa).

ATP is bound by residues Lys11, Phe59, Arg87, Thr93, Arg104, and Asn114. Catalysis depends on His117, which acts as the Pros-phosphohistidine intermediate.

This sequence belongs to the NDK family. Homotetramer. The cofactor is Mg(2+).

It localises to the cytoplasm. It catalyses the reaction a 2'-deoxyribonucleoside 5'-diphosphate + ATP = a 2'-deoxyribonucleoside 5'-triphosphate + ADP. It carries out the reaction a ribonucleoside 5'-diphosphate + ATP = a ribonucleoside 5'-triphosphate + ADP. Functionally, major role in the synthesis of nucleoside triphosphates other than ATP. The ATP gamma phosphate is transferred to the NDP beta phosphate via a ping-pong mechanism, using a phosphorylated active-site intermediate. This chain is Nucleoside diphosphate kinase, found in Shewanella sp. (strain W3-18-1).